The sequence spans 1019 residues: Probable inorganic carbon transporter subunit DabA 1 (1019 aa).

C491 and D493 together coordinate Zn(2+). The interval 624–643 (VPTRLHSPRDEGSAAGGEGQ) is disordered. H676 and C691 together coordinate Zn(2+).

This sequence belongs to the inorganic carbon transporter (TC 9.A.2) DabA family. As to quaternary structure, forms a complex with DabB. Zn(2+) serves as cofactor.

It is found in the cell inner membrane. In terms of biological role, part of an energy-coupled inorganic carbon pump. This is Probable inorganic carbon transporter subunit DabA 1 from Sorangium cellulosum (strain So ce56) (Polyangium cellulosum (strain So ce56)).